A 377-amino-acid chain; its full sequence is Succinyl-diaminopimelate desuccinylase (377 aa).

His-71 is a binding site for Zn(2+). Asp-73 is an active-site residue. Zn(2+) is bound at residue Asp-102. Glu-132 serves as the catalytic Proton acceptor. 3 residues coordinate Zn(2+): Glu-133, Glu-161, and His-346.

Belongs to the peptidase M20A family. DapE subfamily. As to quaternary structure, homodimer. It depends on Zn(2+) as a cofactor. Co(2+) serves as cofactor.

The catalysed reaction is N-succinyl-(2S,6S)-2,6-diaminopimelate + H2O = (2S,6S)-2,6-diaminopimelate + succinate. It participates in amino-acid biosynthesis; L-lysine biosynthesis via DAP pathway; LL-2,6-diaminopimelate from (S)-tetrahydrodipicolinate (succinylase route): step 3/3. Functionally, catalyzes the hydrolysis of N-succinyl-L,L-diaminopimelic acid (SDAP), forming succinate and LL-2,6-diaminopimelate (DAP), an intermediate involved in the bacterial biosynthesis of lysine and meso-diaminopimelic acid, an essential component of bacterial cell walls. This Rhizorhabdus wittichii (strain DSM 6014 / CCUG 31198 / JCM 15750 / NBRC 105917 / EY 4224 / RW1) (Sphingomonas wittichii) protein is Succinyl-diaminopimelate desuccinylase.